Consider the following 207-residue polypeptide: Alpha-1-acid glycoprotein 2 (207 aa).

Residues 1 to 18 (MALHMILVMVSLLPLLEA) form the signal peptide. Glutamine 19 carries the post-translational modification Pyrrolidone carboxylic acid. Asparagine 25, asparagine 34, asparagine 76, asparagine 94, and asparagine 104 each carry an N-linked (GlcNAc...) asparagine glycan. Cysteine 91 and cysteine 184 form a disulfide bridge. Residues 188–207 (EKQQLELEKETKKDPEEGQA) form a disordered region.

This sequence belongs to the calycin superfamily. Lipocalin family. As to expression, expressed by the liver and secreted in plasma.

The protein localises to the secreted. Functionally, functions as a transport protein in the blood stream. Binds various ligands in the interior of its beta-barrel domain. Appears to function in modulating the activity of the immune system during the acute-phase reaction. The chain is Alpha-1-acid glycoprotein 2 (Orm2) from Mus musculus (Mouse).